The chain runs to 126 residues: Spermidine export protein MdtJ (126 aa).

Transmembrane regions (helical) follow at residues 1–21 (MMIYWIFLGLAIVAEIIGTLS), 32–52 (TGHIVMYFMITGSYIMLALAV), 55–75 (VALGVAYALWEGIGILIITVF), and 82–102 (ESLSPLKIAGLVTLVGGIMLV). The interval 104-126 (SGTRKPKKPNSPNRNSGEHHATA) is disordered.

The protein belongs to the drug/metabolite transporter (DMT) superfamily. Small multidrug resistance (SMR) (TC 2.A.7.1) family. MdtJ subfamily. As to quaternary structure, forms a complex with MdtI.

It localises to the cell inner membrane. Catalyzes the excretion of spermidine. In Yersinia enterocolitica serotype O:8 / biotype 1B (strain NCTC 13174 / 8081), this protein is Spermidine export protein MdtJ.